We begin with the raw amino-acid sequence, 607 residues long: Glycosyltransferase 25 family member (607 aa).

Residues 1–22 form the signal peptide; it reads MKPVSCVGLLVLLVGVLVTVKG. Residues N226, N254, N514, and N565 are each glycosylated (N-linked (GlcNAc...) asparagine). Residues 566–607 form a disordered region; sequence DTSDSSAEKKGDKEQLSSKTLMDSTISRDEHELSVANRKSEL. 2 stretches are compositionally biased toward basic and acidic residues: residues 571–581 and 591–607; these read SAEKKGDKEQL and ISRD…KSEL. The short motif at 604 to 607 is the Prevents secretion from ER element; the sequence is KSEL.

The protein belongs to the glycosyltransferase 25 family.

The protein resides in the endoplasmic reticulum lumen. This chain is Glycosyltransferase 25 family member, found in Aedes aegypti (Yellowfever mosquito).